Consider the following 440-residue polypeptide: Histidinol dehydrogenase (440 aa).

The NAD(+) site is built by Tyr-136, Gln-197, and Asn-220. Substrate is bound by residues Ser-243, Gln-265, and His-268. Residues Gln-265 and His-268 each coordinate Zn(2+). Active-site proton acceptor residues include Glu-333 and His-334. The substrate site is built by His-334, Asp-367, Glu-421, and His-426. Residue Asp-367 participates in Zn(2+) binding. Residue His-426 participates in Zn(2+) binding.

This sequence belongs to the histidinol dehydrogenase family. Requires Zn(2+) as cofactor.

It carries out the reaction L-histidinol + 2 NAD(+) + H2O = L-histidine + 2 NADH + 3 H(+). Its pathway is amino-acid biosynthesis; L-histidine biosynthesis; L-histidine from 5-phospho-alpha-D-ribose 1-diphosphate: step 9/9. In terms of biological role, catalyzes the sequential NAD-dependent oxidations of L-histidinol to L-histidinaldehyde and then to L-histidine. The sequence is that of Histidinol dehydrogenase from Pseudomonas aeruginosa (strain ATCC 15692 / DSM 22644 / CIP 104116 / JCM 14847 / LMG 12228 / 1C / PRS 101 / PAO1).